A 185-amino-acid polypeptide reads, in one-letter code: Vomeronasal secretory protein 2 (185 aa).

An N-terminal signal peptide occupies residues 1–19 (MKSLLLTVTLSSLVATLQT). Cys-80 and Cys-172 are joined by a disulfide.

It belongs to the calycin superfamily. Lipocalin family. Specifically expressed in vomeronasal and posterior glands of the nasal septum, the ducts of which open into the lumen of the vomeronasal organ.

Its subcellular location is the secreted. Its function is as follows. Transport of lipophilic molecules, possible pheromone-carrier. The polypeptide is Vomeronasal secretory protein 2 (Lcn4) (Mus musculus (Mouse)).